The sequence spans 202 residues: LexA repressor 2 (202 aa).

The segment at residues leucine 28–threonine 48 is a DNA-binding region (H-T-H motif). Catalysis depends on for autocatalytic cleavage activity residues serine 123 and lysine 160.

The protein belongs to the peptidase S24 family. As to quaternary structure, homodimer.

The enzyme catalyses Hydrolysis of Ala-|-Gly bond in repressor LexA.. Functionally, represses a number of genes involved in the response to DNA damage (SOS response), including recA and lexA. In the presence of single-stranded DNA, RecA interacts with LexA causing an autocatalytic cleavage which disrupts the DNA-binding part of LexA, leading to derepression of the SOS regulon and eventually DNA repair. The protein is LexA repressor 2 of Pseudomonas putida (strain ATCC 47054 / DSM 6125 / CFBP 8728 / NCIMB 11950 / KT2440).